Reading from the N-terminus, the 160-residue chain is UPF0260 protein Rleg2_0895 (160 aa).

The protein belongs to the UPF0260 family.

The chain is UPF0260 protein Rleg2_0895 from Rhizobium leguminosarum bv. trifolii (strain WSM2304).